Reading from the N-terminus, the 455-residue chain is mRNA cleavage and polyadenylation factor CLP1 (455 aa).

ATP-binding residues include Glu-28 and Lys-67. Residues Glu-112–Leu-131 are disordered. An ATP-binding site is contributed by Gly-137–Ser-142.

This sequence belongs to the Clp1 family. Clp1 subfamily. As to quaternary structure, component of a pre-mRNA cleavage factor complex. Interacts directly with PCF11.

Its subcellular location is the nucleus. Its function is as follows. Required for endonucleolytic cleavage during polyadenylation-dependent pre-mRNA 3'-end formation. In Pyricularia oryzae (strain 70-15 / ATCC MYA-4617 / FGSC 8958) (Rice blast fungus), this protein is mRNA cleavage and polyadenylation factor CLP1.